The following is a 1037-amino-acid chain: Multidrug resistance protein MdtF (1037 aa).

Topologically, residues 1–9 are cytoplasmic; that stretch reads MANYFIDRP. A helical transmembrane segment spans residues 10–30; the sequence is VFAWVLAIIMMLAGGLAIMNL. The Periplasmic segment spans residues 31–338; it reads PVAQYPQIAP…TTPFIEISIQ (308 aa). A helical transmembrane segment spans residues 339–359; the sequence is EVFKTLVEAIILVFLVMYLFL. The Cytoplasmic segment spans residues 360-369; sequence QNFRATIIPT. A helical transmembrane segment spans residues 370-390; that stretch reads IAVPVVILGTFAILSAVGFTI. Residues 391-392 are Periplasmic-facing; it reads NT. The chain crosses the membrane as a helical span at residues 393–413; the sequence is LTMFGMVLAIGLLVDDAIVVV. At 414–441 the chain is on the cytoplasmic side; the sequence is ENVERVIAEDKLPPKEATHKSMGQIQRA. The helical transmembrane segment at 442–462 threads the bilayer; sequence LVGIAVVLSAVFMPMAFMSGA. The Periplasmic segment spans residues 463-471; sequence TGEIYRQFS. Residues 472 to 492 traverse the membrane as a helical segment; sequence ITLISSMLLSVFVAMSLTPAL. Residues 493–534 are Cytoplasmic-facing; it reads CATILKAAPEGGHKPNALFARFNTLFEKSTQHYTDSTRSLLR. A helical transmembrane segment spans residues 535–555; sequence CTGRYMVIYLLICAGMAVLFL. At 556–870 the chain is on the periplasmic side; that stretch reads RTPTSFLPEE…SYQEALSSNQ (315 aa). A helical membrane pass occupies residues 871–891; the sequence is APALYAISLVVVFLALAALYE. Residue Ser-892 is a topological domain, cytoplasmic. Residues 893–913 form a helical membrane-spanning segment; it reads WSIPFSVMLVVPLGVVGALLA. Topologically, residues 914 to 927 are periplasmic; sequence TDLRGLSNDVYFQV. A helical membrane pass occupies residues 928–948; the sequence is GLLTTIGLSAKNAILIVEFAV. Residues 949-972 are Cytoplasmic-facing; the sequence is EMMQKEGKTPIEAIIEAARMRLRP. Residues 973-993 form a helical membrane-spanning segment; it reads ILMTSLAFILGVLPLVISHGA. Topologically, residues 994–1006 are periplasmic; sequence GSGAQNAVGTGVM. The chain crosses the membrane as a helical span at residues 1007–1027; it reads GGMFAATVLAIYFVPVFFVVV. Topologically, residues 1028–1037 are cytoplasmic; that stretch reads EHLFARFKKA.

The protein belongs to the resistance-nodulation-cell division (RND) (TC 2.A.6) family. As to quaternary structure, homotrimer. Part of the tripartite efflux system MdtEF-TolC, which is composed of an inner membrane transporter, MdtF, a membrane fusion protein, MdtE, and an outer membrane component, TolC. The complex forms a large protein conduit and can translocate molecules across both the inner and outer membranes.

The protein localises to the cell inner membrane. Part of the tripartite efflux system MdtEF-TolC, which confers resistance to various compounds. This chain is Multidrug resistance protein MdtF (mdtF), found in Escherichia coli O157:H7.